The chain runs to 364 residues: TD and POZ domain-containing protein 2 (364 aa).

The MATH domain occupies 19–149 (EFCYEWTISN…KDKLTLCCKV (131 aa)). The BTB domain maps to 188-255 (TDCSLLVAGH…IYTGKAPTLH (68 aa)).

This sequence belongs to the Tdpoz family.

In Mus musculus (Mouse), this protein is TD and POZ domain-containing protein 2.